The following is a 492-amino-acid chain: N-succinylglutamate 5-semialdehyde dehydrogenase (492 aa).

220-225 lines the NAD(+) pocket; sequence GSASTG. Active-site residues include Glu-243 and Cys-277.

This sequence belongs to the aldehyde dehydrogenase family. AstD subfamily.

It catalyses the reaction N-succinyl-L-glutamate 5-semialdehyde + NAD(+) + H2O = N-succinyl-L-glutamate + NADH + 2 H(+). The protein operates within amino-acid degradation; L-arginine degradation via AST pathway; L-glutamate and succinate from L-arginine: step 4/5. Catalyzes the NAD-dependent reduction of succinylglutamate semialdehyde into succinylglutamate. This Salmonella schwarzengrund (strain CVM19633) protein is N-succinylglutamate 5-semialdehyde dehydrogenase.